The primary structure comprises 2110 residues: Protein Ycf2 (2110 aa).

Positions 190-209 (DSSQLKGSSDQSRDPLDSIS) are disordered. 1442-1449 (GSIGTGRS) contributes to the ATP binding site.

Belongs to the Ycf2 family.

The protein localises to the plastid. Its subcellular location is the chloroplast stroma. In terms of biological role, probable ATPase of unknown function. Its presence in a non-photosynthetic plant (Epifagus virginiana) and experiments in tobacco indicate that it has an essential function which is probably not related to photosynthesis. This is Protein Ycf2 from Panax ginseng (Korean ginseng).